A 1291-amino-acid chain; its full sequence is Capping protein-inhibiting regulator of actin dynamics (1291 aa).

A phosphoserine mark is found at Ser7 and Ser28. Disordered regions lie at residues Lys48–Glu71, Gln84–Ile137, His159–Lys221, Lys234–Arg253, Gln267–Ala663, and Leu701–Thr1238. Phosphoserine is present on Ser132. Positions His159 to Trp176 are enriched in basic residues. Residues Glu184 to Gln199 are compositionally biased toward polar residues. Over residues Gly201–Lys221 the composition is skewed to basic and acidic residues. Positions Leu270–Glu291 are enriched in acidic residues. Basic and acidic residues-rich tracts occupy residues Pro302–Glu318, Asp326–Lys461, and Glu470–Pro483. A required for interaction with actin-capping proteins region spans residues Ala324–Asp560. Position 482 is a phosphothreonine (Thr482). A phosphoserine mark is found at Ser493 and Ser510. Basic and acidic residues-rich tracts occupy residues Ala506 to Leu527 and Glu534 to Gly543. A compositionally biased stretch (low complexity) spans Glu580–Ala593. The segment covering Asp594–Thr612 has biased composition (basic and acidic residues). Position 636 is a phosphoserine (Ser636). At Thr639 the chain carries Phosphothreonine. A compositionally biased stretch (basic and acidic residues) spans Lys749–Gly778. Position 867 is a phosphoserine (Ser867). The segment covering Thr875–Asp888 has biased composition (low complexity). Basic and acidic residues predominate over residues Gln969 to Glu983. The residue at position 1033 (Thr1033) is a Phosphothreonine. At Ser1037 the chain carries Phosphoserine. Residues Gly1056–Ser1070 show a composition bias toward basic and acidic residues. Ser1076 carries the phosphoserine modification. Basic and acidic residues-rich tracts occupy residues Glu1081 to Pro1098, Thr1117 to Glu1141, and Gly1157 to Lys1182. Composition is skewed to polar residues over residues Glu1183–Ser1197 and Lys1229–Thr1238.

Directly interacts with actin-capping proteins CAPZA1, CAPZA2 and CAPZB; this interaction decreases the binding of capping proteins to actin. As to expression, expressed in the small intestine (at protein level).

Its subcellular location is the cytoplasm. The protein resides in the cytosol. Functionally, involved in epithelial cell integrity by acting on the dynamics of the actin cytoskeleton. Positively regulates the actin polymerization, by inhibiting the interaction of actin-capping proteins with actin. This is Capping protein-inhibiting regulator of actin dynamics from Mus musculus (Mouse).